A 600-amino-acid polypeptide reads, in one-letter code: Putative heme-binding protein NP_2262A (600 aa).

Position 180 (histidine 180) interacts with heme. Positions 261–289 are disordered; that stretch reads TSETGHGGADSQTSSESSGGRPSTDPSHD. A compositionally biased stretch (polar residues) spans 270–285; that stretch reads DSQTSSESSGGRPSTD. The ABM domain maps to 510-598; the sequence is GTMGMFYTVK…VLADRPRHVF (89 aa).

This sequence in the N-terminal section; belongs to the ChdC family.

In Natronomonas pharaonis (strain ATCC 35678 / DSM 2160 / CIP 103997 / JCM 8858 / NBRC 14720 / NCIMB 2260 / Gabara) (Halobacterium pharaonis), this protein is Putative heme-binding protein NP_2262A.